The chain runs to 575 residues: MSGNWVHPGQILIWAIWVLAAPTKGPSAEGPQRNTRLGWIQGKQVTVLGSPVPVNVFLGVPFAAPPLGSLRFTNPQPASPWDNLREATSYPNLCLQNSEWLLLDQHMLKVHYPKFGVSEDCLYLNIYAPAHADTGSKLPVLVWFPGGAFKTGSASIFDGSALAAYEDVLVVVVQYRLGIFGFFTTWDQHAPGNWAFKDQVAALSWVQKNIEFFGGDPSSVTIFGESAGAISVSSLILSPMAKGLFHKAIMESGVAIIPYLEAHDYEKSEDLQVVAHFCGNNASDSEALLRCLRTKPSKELLTLSQKTKSFTRVVDGAFFPNEPLDLLSQKAFKAIPSIIGVNNHECGFLLPMKEAPEILSGSNKSLALHLIQNILHIPPQYLHLVANEYFHDKHSLTEIRDSLLDLLGDVFFVVPALITARYHRDAGAPVYFYEFRHRPQCFEDTKPAFVKADHADEVRFVFGGAFLKGDIVMFEGATEEEKLLSRKMMKYWATFARTGNPNGNDLSLWPAYNLTEQYLQLDLNMSLGQRLKEPRVDFWTSTIPLILSASDMLHSPLSSLTFLSLLQPFFFFCAP.

A signal peptide spans 1–20 (MSGNWVHPGQILIWAIWVLA). Cys94 and Cys121 form a disulfide bridge. The active-site Acyl-ester intermediate is the Ser226. Asn281 carries N-linked (GlcNAc...) asparagine glycosylation. Glu345 functions as the Charge relay system in the catalytic mechanism. A glycan (N-linked (GlcNAc...) asparagine) is linked at Asn363. The active-site Charge relay system is His454. Asn513 and Asn524 each carry an N-linked (GlcNAc...) asparagine glycan.

Belongs to the type-B carboxylesterase/lipase family. In terms of processing, N-glycosylated.

The protein resides in the secreted. It carries out the reaction a carboxylic ester + H2O = an alcohol + a carboxylate + H(+). In terms of biological role, involved in the detoxification of xenobiotics and in the activation of ester and amide prodrugs. This chain is Carboxylesterase 5A (CES5A), found in Homo sapiens (Human).